A 429-amino-acid chain; its full sequence is Inositol-3-phosphate synthase 1 (429 aa).

The helical transmembrane segment at 12-32 (LGVLVVGVGGAVATTMIVGTL) threads the bilayer. NAD(+) is bound by residues Ala-22, Val-23, Asp-79, Ala-116, Ala-165, Thr-167, Tyr-201, Ser-244, Arg-276, Asp-277, and Lys-290.

It belongs to the myo-inositol 1-phosphate synthase family. Homotetramer. Requires NAD(+) as cofactor.

It is found in the membrane. The enzyme catalyses D-glucose 6-phosphate = 1D-myo-inositol 3-phosphate. It functions in the pathway polyol metabolism; myo-inositol biosynthesis; myo-inositol from D-glucose 6-phosphate: step 1/2. Functionally, key enzyme in myo-inositol biosynthesis pathway that catalyzes the conversion of glucose 6-phosphate to 1D-myo-inositol 3-phosphate in a NAD-dependent manner. The sequence is that of Inositol-3-phosphate synthase 1 from Bacteroides thetaiotaomicron (strain ATCC 29148 / DSM 2079 / JCM 5827 / CCUG 10774 / NCTC 10582 / VPI-5482 / E50).